A 408-amino-acid polypeptide reads, in one-letter code: Phosphopentomutase (408 aa).

Residues aspartate 10, aspartate 307, histidine 312, aspartate 348, histidine 349, and histidine 360 each contribute to the Mn(2+) site.

Belongs to the phosphopentomutase family. It depends on Mn(2+) as a cofactor.

It is found in the cytoplasm. It catalyses the reaction 2-deoxy-alpha-D-ribose 1-phosphate = 2-deoxy-D-ribose 5-phosphate. The enzyme catalyses alpha-D-ribose 1-phosphate = D-ribose 5-phosphate. The protein operates within carbohydrate degradation; 2-deoxy-D-ribose 1-phosphate degradation; D-glyceraldehyde 3-phosphate and acetaldehyde from 2-deoxy-alpha-D-ribose 1-phosphate: step 1/2. Functionally, isomerase that catalyzes the conversion of deoxy-ribose 1-phosphate (dRib-1-P) and ribose 1-phosphate (Rib-1-P) to deoxy-ribose 5-phosphate (dRib-5-P) and ribose 5-phosphate (Rib-5-P), respectively. The protein is Phosphopentomutase of Buchnera aphidicola subsp. Baizongia pistaciae (strain Bp).